A 93-amino-acid polypeptide reads, in one-letter code: Cell division topological specificity factor (93 aa).

This sequence belongs to the MinE family.

Its function is as follows. Prevents the cell division inhibition by proteins MinC and MinD at internal division sites while permitting inhibition at polar sites. This ensures cell division at the proper site by restricting the formation of a division septum at the midpoint of the long axis of the cell. The sequence is that of Cell division topological specificity factor from Syntrophus aciditrophicus (strain SB).